The primary structure comprises 331 residues: Trans-O-hydroxybenzylidenepyruvate hydratase-aldolase (331 aa).

The protein belongs to the DapA family.

It catalyses the reaction (3E)-4-(2-hydroxyphenyl)-2-oxobut-3-enoate + H2O = salicylaldehyde + pyruvate. The protein operates within aromatic compound metabolism; naphthalene degradation. Its function is as follows. Involved in the naphthalene upper catabolic pathway. Catalyzes the transformation of trans-O-hydroxybenzylidenepyruvate (THBPA) to salicylaldehyde and pyruvate. The reaction is reversible. Can also use substrate which carry trans-alpha,beta-unsaturated keto acid side chain and adjacent hydroxyl group such as trans-4-(3-hydroxy-2-thianaphthenyl)-2-oxo-but-3-enoate, trans-4-(3-hydroxy-2-benzofuranyl)-2-oxobut-3-enoate, and trans-4-(3-hydroxy-2-thienyl)-2-oxobut-3-enoate. This chain is Trans-O-hydroxybenzylidenepyruvate hydratase-aldolase (nahE), found in Pseudomonas putida (Arthrobacter siderocapsulatus).